The sequence spans 334 residues: Anthranilate phosphoribosyltransferase (334 aa).

Residues Gly-79, 82-83 (GD), Ser-87, 89-92 (NIST), 107-115 (KHGNRSISS), and Ser-119 contribute to the 5-phospho-alpha-D-ribose 1-diphosphate site. Gly-79 lines the anthranilate pocket. Ser-91 contacts Mg(2+). Residue Asn-110 participates in anthranilate binding. An anthranilate-binding site is contributed by Arg-165. Asp-224 and Glu-225 together coordinate Mg(2+).

Belongs to the anthranilate phosphoribosyltransferase family. Homodimer. It depends on Mg(2+) as a cofactor.

It carries out the reaction N-(5-phospho-beta-D-ribosyl)anthranilate + diphosphate = 5-phospho-alpha-D-ribose 1-diphosphate + anthranilate. It functions in the pathway amino-acid biosynthesis; L-tryptophan biosynthesis; L-tryptophan from chorismate: step 2/5. Catalyzes the transfer of the phosphoribosyl group of 5-phosphorylribose-1-pyrophosphate (PRPP) to anthranilate to yield N-(5'-phosphoribosyl)-anthranilate (PRA). This Streptococcus pneumoniae serotype 19F (strain G54) protein is Anthranilate phosphoribosyltransferase.